The sequence spans 85 residues: U4-theraphotoxin-Hhn1c (85 aa).

An N-terminal signal peptide occupies residues M1 to A22. A propeptide spanning residues E23–R48 is cleaved from the precursor. Cystine bridges form between C52–C66, C56–C77, and C71–C82.

Belongs to the neurotoxin 12 (Hwtx-2) family. 02 (Hwtx-2) subfamily. As to expression, expressed by the venom gland.

It is found in the secreted. Its function is as follows. Postsynaptic neurotoxin. This is U4-theraphotoxin-Hhn1c from Cyriopagopus hainanus (Chinese bird spider).